The following is a 122-amino-acid chain: Large ribosomal subunit protein uL14 (122 aa).

Belongs to the universal ribosomal protein uL14 family. As to quaternary structure, part of the 50S ribosomal subunit. Forms a cluster with proteins L3 and L19. In the 70S ribosome, L14 and L19 interact and together make contacts with the 16S rRNA in bridges B5 and B8.

Binds to 23S rRNA. Forms part of two intersubunit bridges in the 70S ribosome. This Xylella fastidiosa (strain M23) protein is Large ribosomal subunit protein uL14.